The sequence spans 629 residues: tRNA uridine 5-carboxymethylaminomethyl modification enzyme MnmG (629 aa).

Residues 13–18 (GGGHAG), V125, and S180 each bind FAD. 273–287 (GPRYCPSIEDKVMRF) is an NAD(+) binding site. Q370 contributes to the FAD binding site.

Belongs to the MnmG family. In terms of assembly, homodimer. Heterotetramer of two MnmE and two MnmG subunits. The cofactor is FAD.

It localises to the cytoplasm. Functionally, NAD-binding protein involved in the addition of a carboxymethylaminomethyl (cmnm) group at the wobble position (U34) of certain tRNAs, forming tRNA-cmnm(5)s(2)U34. This chain is tRNA uridine 5-carboxymethylaminomethyl modification enzyme MnmG, found in Klebsiella pneumoniae subsp. pneumoniae (strain ATCC 700721 / MGH 78578).